Reading from the N-terminus, the 478-residue chain is Adenosylhomocysteinase (478 aa).

The substrate site is built by Thr-67, Asp-144, and Glu-204. Position 205-207 (205-207 (TTT)) interacts with NAD(+). The substrate site is built by Lys-234 and Asp-238. Residues Asn-239, 268 to 273 (GYGDVG), Glu-291, Asn-326, 347 to 349 (IGH), and Asn-392 each bind NAD(+).

This sequence belongs to the adenosylhomocysteinase family. NAD(+) is required as a cofactor.

The protein localises to the cytoplasm. The enzyme catalyses S-adenosyl-L-homocysteine + H2O = L-homocysteine + adenosine. It functions in the pathway amino-acid biosynthesis; L-homocysteine biosynthesis; L-homocysteine from S-adenosyl-L-homocysteine: step 1/1. May play a key role in the regulation of the intracellular concentration of adenosylhomocysteine. The polypeptide is Adenosylhomocysteinase (Nitrosomonas eutropha (strain DSM 101675 / C91 / Nm57)).